The following is a 54-amino-acid chain: MSQNEVDINIISLSEVVSRPNPNKQVVELNRTSLFWGLLLIFVLAVLFSSYIFN.

Residues 33–53 (SLFWGLLLIFVLAVLFSSYIF) form a helical membrane-spanning segment.

Belongs to the PsbL family. PSII is composed of 1 copy each of membrane proteins PsbA, PsbB, PsbC, PsbD, PsbE, PsbF, PsbH, PsbI, PsbJ, PsbK, PsbL, PsbM, PsbT, PsbX, PsbY, PsbZ, Psb30/Ycf12, at least 3 peripheral proteins of the oxygen-evolving complex and a large number of cofactors. It forms dimeric complexes.

The protein resides in the plastid. It is found in the chloroplast thylakoid membrane. In terms of biological role, one of the components of the core complex of photosystem II (PSII). PSII is a light-driven water:plastoquinone oxidoreductase that uses light energy to abstract electrons from H(2)O, generating O(2) and a proton gradient subsequently used for ATP formation. It consists of a core antenna complex that captures photons, and an electron transfer chain that converts photonic excitation into a charge separation. This subunit is found at the monomer-monomer interface and is required for correct PSII assembly and/or dimerization. The polypeptide is Photosystem II reaction center protein L (Stigeoclonium helveticum (Green alga)).